Reading from the N-terminus, the 488-residue chain is MNSLYIAGSWLAGQGELFESRNPVTQHVLWAGNGATAEQVESAVQAARQAFPAWARRPLEERISVLETFAATLKNRADEIARCIGEETGKPLWESVTEVTSMANKIAISVQSYRERTGEKSGPLGDATAVLRHKPHGVVAVFGPYNFPGHLPNGHIVPALLAGNTVLFKPSELTPKVAELTVQCWIEAGLPAGVLNLLQGARETGIALAANPGIDGLFFTGSSRTGNHLHQQFSGRPDKILALEMGGNNPLVVDEVADVDAAVYTIIQSAFISAGQRCTCARRLLVPEGAWGDALLARLVAVSATIAVGAFDQQPAPFMGSVISLAAAKALMDAQELMLANGAVALLEMTQPQDQAALLTPGIIDVTGVTAREDEELFGPLLQVIRYADFAAAIAEANNTQYGLAAGLLSDSEARYQQFWLESRAGIVNWNKQLTGAASTAPFGGVGASGNHRASAYYAADYCAYPVASLETPSLVVPATLTPGVRLS.

221-226 serves as a coordination point for NAD(+); sequence GSSRTG. Catalysis depends on residues Glu-244 and Cys-278.

The protein belongs to the aldehyde dehydrogenase family. AstD subfamily.

The enzyme catalyses N-succinyl-L-glutamate 5-semialdehyde + NAD(+) + H2O = N-succinyl-L-glutamate + NADH + 2 H(+). The protein operates within amino-acid degradation; L-arginine degradation via AST pathway; L-glutamate and succinate from L-arginine: step 4/5. Catalyzes the NAD-dependent reduction of succinylglutamate semialdehyde into succinylglutamate. This is N-succinylglutamate 5-semialdehyde dehydrogenase from Pseudomonas fluorescens (strain SBW25).